The chain runs to 438 residues: 3-phosphoshikimate 1-carboxyvinyltransferase (438 aa).

K26, S27, and R31 together coordinate 3-phosphoshikimate. K26 contributes to the phosphoenolpyruvate binding site. Phosphoenolpyruvate-binding residues include G99 and R127. S172, Q174, D320, and K347 together coordinate 3-phosphoshikimate. Q174 contributes to the phosphoenolpyruvate binding site. The active-site Proton acceptor is D320. Positions 351 and 392 each coordinate phosphoenolpyruvate.

The protein belongs to the EPSP synthase family. In terms of assembly, monomer.

The protein resides in the cytoplasm. It carries out the reaction 3-phosphoshikimate + phosphoenolpyruvate = 5-O-(1-carboxyvinyl)-3-phosphoshikimate + phosphate. It functions in the pathway metabolic intermediate biosynthesis; chorismate biosynthesis; chorismate from D-erythrose 4-phosphate and phosphoenolpyruvate: step 6/7. In terms of biological role, catalyzes the transfer of the enolpyruvyl moiety of phosphoenolpyruvate (PEP) to the 5-hydroxyl of shikimate-3-phosphate (S3P) to produce enolpyruvyl shikimate-3-phosphate and inorganic phosphate. The chain is 3-phosphoshikimate 1-carboxyvinyltransferase from Xanthomonas campestris pv. campestris (strain 8004).